A 146-amino-acid polypeptide reads, in one-letter code: UPF0178 protein LMOf2365_1475 (146 aa).

Belongs to the UPF0178 family.

The chain is UPF0178 protein LMOf2365_1475 from Listeria monocytogenes serotype 4b (strain F2365).